Reading from the N-terminus, the 591-residue chain is L-lactate dehydrogenase (cytochrome) (591 aa).

The transit peptide at 1–80 directs the protein to the mitochondrion; that stretch reads MLKYKPLLKI…LNWHNGQIDN (80 aa). The Cytochrome b5 heme-binding domain occupies 88–165; the sequence is KQKISPAEVA…APEKKLGPLQ (78 aa). Heme b-binding residues include histidine 123, histidine 146, tyrosine 177, glutamine 219, and tyrosine 223. Positions 197 to 563 constitute an FMN hydroxy acid dehydrogenase domain; the sequence is PPLDNIINLY…KPDLLDLSTL (367 aa). Pyruvate is bound at residue tyrosine 223. Residues 275–278, serine 308, and glutamine 332 contribute to the FMN site; that span reads SATA. Tyrosine 334 lines the pyruvate pocket. Threonine 360 is an FMN binding site. Lysine 376 is a heme b binding site. Lysine 429 provides a ligand contact to FMN. Histidine 453 and arginine 456 together coordinate pyruvate. Histidine 453 acts as the Proton acceptor in catalysis. FMN contacts are provided by residues 489–493 and 512–513; these read DGGVR and GR.

This sequence in the N-terminal section; belongs to the cytochrome b5 family. In the C-terminal section; belongs to the FMN-dependent alpha-hydroxy acid dehydrogenase family. Homotetramer. FMN serves as cofactor. The cofactor is heme b.

Its subcellular location is the mitochondrion intermembrane space. The catalysed reaction is (S)-lactate + 2 Fe(III)-[cytochrome c] = 2 Fe(II)-[cytochrome c] + pyruvate + 2 H(+). Functionally, catalyzes the oxidation of (S)-lactate (L-lactate) to pyruvate with subsequent transfer of electrons to cytochrome c. Is involved in the utilization of (S)-lactate as a sole source of carbon for growth. Can also use ferricyanide as an electron acceptor in vitro. The sequence is that of L-lactate dehydrogenase (cytochrome) (CYB2) from Saccharomyces cerevisiae (strain ATCC 204508 / S288c) (Baker's yeast).